A 358-amino-acid polypeptide reads, in one-letter code: Dynein axonemal assembly factor 10 (358 aa).

WD repeat units lie at residues Glu-64–Tyr-106, Asn-116–Ala-155, Glu-163–Glu-206, Asn-208–Gly-250, Ala-258–Arg-298, and Leu-320–Leu-358.

Interacts with PIH1D1; the interaction associates DNAAF10 with the R2TP complex. Interacts with several dynein axonemal assembly factors.

It localises to the dynein axonemal particle. Key assembly factor specifically required for the stability of axonemal dynein heavy chains in cytoplasm. This chain is Dynein axonemal assembly factor 10 (dnaaf10), found in Xenopus tropicalis (Western clawed frog).